A 291-amino-acid polypeptide reads, in one-letter code: MTFQNLILSLQNYWANQGCVIQQPYDTEKGAGTFNPATFLRVLGPEPWNVAYVEPSRRPTDGRYGENPNRLQHYYQFQVIMKPSPANILDLYLDSLRAFGINPSQHDIRFVEDDWESPTLGAWGLGWEVWLDGMEITQFTYFQQAGGIDLKPVSSEITYGCERIAMYLQGVDNVYDLEWVKGVKYGDIHHQTEVEFSTYNFEEADVALLLELFGKYEKECIRLAEKDLVFPAYDFVMKCSHTFNLLDARGAISVTERASYIGRVRNVARLCAEGYVRQRERLGYPMLKGGN.

It belongs to the class-II aminoacyl-tRNA synthetase family. As to quaternary structure, tetramer of two alpha and two beta subunits.

The protein localises to the cytoplasm. It carries out the reaction tRNA(Gly) + glycine + ATP = glycyl-tRNA(Gly) + AMP + diphosphate. The protein is Glycine--tRNA ligase alpha subunit of Trichlorobacter lovleyi (strain ATCC BAA-1151 / DSM 17278 / SZ) (Geobacter lovleyi).